The primary structure comprises 434 residues: Forkhead box protein A2 (434 aa).

A DNA-binding region (fork-head) is located at residues 149–243 (KPPYSYISLI…ENGCYLRRQK (95 aa)). Basic and acidic residues predominate over residues 249–262 (KKPSLREGGGKKLS). The tract at residues 249–339 (KKPSLREGGG…VLSHEAQSHL (91 aa)) is disordered. 2 stretches are compositionally biased toward low complexity: residues 263–291 (EGSSSVGSAANSSSESSVGNESPHSSSSP) and 317–333 (ASQAQHLLSQHHSVLSH).

It is found in the nucleus. Its function is as follows. Acts as a transcriptional activator during early development, limiting the extent of mesoderm formation in the gastrula. Binds to DNA via the target sequence 5'-GT[AC]AACA-3', with 5'-GTAAACA-3' being the preferred binding site. The polypeptide is Forkhead box protein A2 (Xenopus tropicalis (Western clawed frog)).